Reading from the N-terminus, the 199-residue chain is dCTP deaminase, dUMP-forming (199 aa).

Residues 101 to 106 (KSSLGR), Asp119, 127 to 129 (TLE), Gln148, Tyr162, and Gln174 contribute to the dCTP site. Glu129 (proton donor/acceptor) is an active-site residue. The interval 163-199 (GSAAAGSKYQGQRGPTPSRSYLNFPLPSDAVDAVESR) is disordered. The segment covering 171 to 183 (YQGQRGPTPSRSY) has biased composition (polar residues).

Belongs to the dCTP deaminase family. Homotrimer.

The catalysed reaction is dCTP + 2 H2O = dUMP + NH4(+) + diphosphate. Its pathway is pyrimidine metabolism; dUMP biosynthesis; dUMP from dCTP: step 1/1. Bifunctional enzyme that catalyzes both the deamination of dCTP to dUTP and the hydrolysis of dUTP to dUMP without releasing the toxic dUTP intermediate. In Nocardia farcinica (strain IFM 10152), this protein is dCTP deaminase, dUMP-forming.